The sequence spans 427 residues: MGVWLKNGMSFNKDGELMRTHIKIEHGTIAAILYEQPLEANEDVIDVGGRLIVPGLIDLHVHLREPGGEAKETIETGTLAAAKGGFTTVAAMPNTNPAPDRKEQMEWLQARIRETARVNVLPYAAITIGQKGEELTDFAALKEAGAFAFTDDGVGVQSAGMMFEAMKQAAALDMAIVAHCEDDTLTNGGAVHDGEFARRYGLRGIPSVCEAVHIARDVLLAEAAGCHYHVCHISTKESVRVVRDAKRAGIRVTAEVTPHHLLLCDEDIPGLDANYKMNPPLRSREDRDALIEGLLDGTIDFIATDHAPHTAAEKAKGIEAAPFGIVGLETAFPLLYTHFVKTGVFTLKQLVDWLTIKPAQCFGLKAGRLAVGAPADIAVIDLETEEAIDPETFASKGKNTPFAGWVCQGWPVMTFVGGTLVWEKGRA.

His60 and His62 together coordinate Zn(2+). Substrate is bound by residues 62–64 (HLR) and Asn94. 3 residues coordinate Zn(2+): Asp152, His179, and His232. Asn278 is a substrate binding site. Zn(2+) is bound at residue Asp305. Residue Asp305 is part of the active site. Substrate is bound by residues His309 and 323–324 (FG).

The protein belongs to the metallo-dependent hydrolases superfamily. DHOase family. Class I DHOase subfamily. It depends on Zn(2+) as a cofactor.

It catalyses the reaction (S)-dihydroorotate + H2O = N-carbamoyl-L-aspartate + H(+). It participates in pyrimidine metabolism; UMP biosynthesis via de novo pathway; (S)-dihydroorotate from bicarbonate: step 3/3. Catalyzes the reversible cyclization of carbamoyl aspartate to dihydroorotate. The protein is Dihydroorotase of Bacillus caldolyticus.